A 284-amino-acid chain; its full sequence is 2-dehydro-3-deoxyphosphooctonate aldolase (284 aa).

It belongs to the KdsA family.

It localises to the cytoplasm. It carries out the reaction D-arabinose 5-phosphate + phosphoenolpyruvate + H2O = 3-deoxy-alpha-D-manno-2-octulosonate-8-phosphate + phosphate. It functions in the pathway carbohydrate biosynthesis; 3-deoxy-D-manno-octulosonate biosynthesis; 3-deoxy-D-manno-octulosonate from D-ribulose 5-phosphate: step 2/3. It participates in bacterial outer membrane biogenesis; lipopolysaccharide biosynthesis. In Yersinia pseudotuberculosis serotype O:1b (strain IP 31758), this protein is 2-dehydro-3-deoxyphosphooctonate aldolase.